The chain runs to 457 residues: DDB1- and CUL4-associated factor 10 (457 aa).

WD repeat units lie at residues 65–104, 108–146, 150–189, and 195–234; these read RTHG…HIKT, AHED…SKVC, GHTS…EDGC, and FHTR…KSLE. The span at 246-265 shows a compositional bias: low complexity; sequence TASTSDMTSTSSDTRPSSSP. Residues 246–304 form a disordered region; that stretch reads TASTSDMTSTSSDTRPSSSPCHNSDLGPLFEKHMSRSSQREGASPRNSLEVLTPEVPGE. Positions 281 to 292 are enriched in polar residues; it reads RSSQREGASPRN. WD repeat units lie at residues 306-346, 368-406, and 424-457; these read DRGN…QEGA, VGRG…KELV, and SHKD…QPKF.

The protein belongs to the WD repeat DCAF10 family.

The protein operates within protein modification; protein ubiquitination. In terms of biological role, may function as a substrate receptor for CUL4-DDB1 E3 ubiquitin-protein ligase complex. This chain is DDB1- and CUL4-associated factor 10 (dcaf10), found in Xenopus tropicalis (Western clawed frog).